The following is a 200-amino-acid chain: MSETNHPRLILRSKRARALMALPFAISIPRDPPDSIMIARELFNDFKLSIIATVGDVVSLNVATYWRRPDLRVIDLNTRRGTVIQHSDMDGVVYRVRNERSTLSYESFNIMRSAYANVLSGNRVTIIVDGEEDLLAIPAVLEAPGNTGILYGLYTGYLVLIPAVNEYKILMLKLLTLLDRDECETLRNCNSVNNYGWKNS.

GTP contacts are provided by aspartate 56, valine 57, valine 58, aspartate 75, and glutamate 132.

This sequence belongs to the GTP-dependent DPCK family.

The catalysed reaction is 3'-dephospho-CoA + GTP = GDP + CoA + H(+). Its pathway is cofactor biosynthesis; coenzyme A biosynthesis. Functionally, catalyzes the GTP-dependent phosphorylation of the 3'-hydroxyl group of dephosphocoenzyme A to form coenzyme A (CoA). In Caldivirga maquilingensis (strain ATCC 700844 / DSM 13496 / JCM 10307 / IC-167), this protein is GTP-dependent dephospho-CoA kinase.